We begin with the raw amino-acid sequence, 371 residues long: Repetitive proline-rich cell wall protein 2 (371 aa).

The signal sequence occupies residues 1–22 (MASSNLLVLLLFALFAIPRGLA). 66 repeat units span residues 32–36 (PPVYK), 37–41 (PPVEK), 42–46 (PPVYK), 47–51 (PPVEK), 52–56 (PPVYK), 57–61 (PPVEK), 62–66 (PPVYK), 67–71 (PPVEK), 72–76 (PPVYK), 77–81 (PPVEK), 82–86 (PPVYK), 87–91 (PPVEK), 92–96 (PPVYK), 97–101 (PPVEK), 102–106 (PPVYK), 107–111 (PPVEK), 112–116 (PPVYK), 117–121 (PPVEK), 122–126 (PPVYK), 127–131 (PPVEK), 132–136 (PPVYK), 137–141 (PPVEK), 142–146 (PPVYK), 147–151 (PPVEK), 152–156 (PPVYK), 157–161 (PPVEK), 162–166 (PPVYK), 167–171 (PPVEK), 172–176 (PPVYK), 177–181 (PPVEK), 182–186 (PPVYK), 187–191 (PPVEK), 192–196 (PPVYK), 197–201 (PPVEK), 202–206 (PPVYK), 207–211 (PPVEK), 212–216 (PPVYK), 217–221 (PPVEK), 222–226 (PPVYK), 227–231 (PPVEK), 232–236 (PPIYK), 237–241 (PPVEK), 242–246 (PPVYK), 247–251 (PPVEK), 252–256 (PPVYK), 257–261 (PPVEK), 262–266 (PPIYK), 267–271 (PPVEK), 272–276 (PPVYK), 277–281 (PPVEK), 282–286 (PPVYK), 287–291 (PPVEK), 292–296 (PPVYK), 297–301 (PPVEK), 302–306 (PPVYK), 307–311 (PPVEK), 312–316 (PPVYK), 317–321 (PPVYK), 322–326 (PPVYK), 327–331 (PPVEK), 332–336 (PPVYK), 337–341 (PPVYK), 342–346 (PPVEK), 347–351 (PPVYK), 352–356 (PPVYK), and 357–361 (PPVEK). The tract at residues 32 to 366 (PPVYKPPVEK…PPVEKPPVYG (335 aa)) is 67 X 5 AA approximate tandem repeats of P-P-[IV]-[EY]-K. The segment at 49 to 317 (VEKPPVYKPP…PVEKPPVYKP (269 aa)) is disordered. Positions 339 to 371 (VYKPPVEKPPVYKPPVYKPPVEKPPVYGPPHHP) are disordered. The stretch at 362–366 (PPVYG) is one 67; approximate repeat.

The protein belongs to the plant proline-rich protein superfamily. ENOD12 family. In terms of tissue distribution, expressed in hypocotyls, roots and mature root nodules.

The protein localises to the secreted. It localises to the cell wall. This is a developmentally regulated putative cell wall protein. This is Repetitive proline-rich cell wall protein 2 (PRP2) from Medicago truncatula (Barrel medic).